The sequence spans 100 residues: MKITQEEVTHVANLSKLRFSEKETAAFATTLSKIVDMVELLGEVDTTGVAPTTTMADRKTVLRPDVAEEGTDRDRLFKNVPKKDNYYIKVPAILDDGGDA.

Belongs to the GatC family. Heterotrimer of A, B and C subunits.

It catalyses the reaction L-glutamyl-tRNA(Gln) + L-glutamine + ATP + H2O = L-glutaminyl-tRNA(Gln) + L-glutamate + ADP + phosphate + H(+). It carries out the reaction L-aspartyl-tRNA(Asn) + L-glutamine + ATP + H2O = L-asparaginyl-tRNA(Asn) + L-glutamate + ADP + phosphate + 2 H(+). Functionally, allows the formation of correctly charged Asn-tRNA(Asn) or Gln-tRNA(Gln) through the transamidation of misacylated Asp-tRNA(Asn) or Glu-tRNA(Gln) in organisms which lack either or both of asparaginyl-tRNA or glutaminyl-tRNA synthetases. The reaction takes place in the presence of glutamine and ATP through an activated phospho-Asp-tRNA(Asn) or phospho-Glu-tRNA(Gln). This Streptococcus pneumoniae serotype 19F (strain G54) protein is Aspartyl/glutamyl-tRNA(Asn/Gln) amidotransferase subunit C.